Here is a 156-residue protein sequence, read N- to C-terminus: Small ribosomal subunit protein uS7 (156 aa).

It belongs to the universal ribosomal protein uS7 family. As to quaternary structure, part of the 30S ribosomal subunit. Contacts proteins S9 and S11.

In terms of biological role, one of the primary rRNA binding proteins, it binds directly to 16S rRNA where it nucleates assembly of the head domain of the 30S subunit. Is located at the subunit interface close to the decoding center, probably blocks exit of the E-site tRNA. The sequence is that of Small ribosomal subunit protein uS7 from Klebsiella pneumoniae subsp. pneumoniae (strain ATCC 700721 / MGH 78578).